We begin with the raw amino-acid sequence, 150 residues long: Large ribosomal subunit protein bL9 (150 aa).

The protein belongs to the bacterial ribosomal protein bL9 family.

Binds to the 23S rRNA. The polypeptide is Large ribosomal subunit protein bL9 (Buchnera aphidicola subsp. Schizaphis graminum (strain Sg)).